Reading from the N-terminus, the 108-residue chain is Protein YcgL (108 aa).

Residues 12–96 (MFCVIYRSSK…PPEDLLKQHL (85 aa)) enclose the YcgL domain.

This is Protein YcgL from Escherichia coli O9:H4 (strain HS).